The following is a 288-amino-acid chain: Rhythmically expressed gene 5 protein (288 aa).

Expressed in head, but not in the body. Expression levels oscillate with the circadian rhythm.

Its function is as follows. Involved in the generation of biological rhythms (Potential). In the head, oscillates in abundance with a daily peak during early night, even under constant darkness. Oscillation is dependent on period (per) function. The chain is Rhythmically expressed gene 5 protein (Reg-5) from Drosophila melanogaster (Fruit fly).